The sequence spans 524 residues: GMP synthase [glutamine-hydrolyzing] (524 aa).

The Glutamine amidotransferase type-1 domain maps to 5–195; the sequence is KVIVIDFGGQ…VRGVCGCAGT (191 aa). The active-site Nucleophile is the cysteine 82. Catalysis depends on residues histidine 169 and glutamate 171. The GMPS ATP-PPase domain maps to 196–389; sequence WKMDSFVKNT…LGLPDYLVFR (194 aa). Position 223-229 (223-229) interacts with ATP; sequence SGGVDSS.

As to quaternary structure, homodimer.

It catalyses the reaction XMP + L-glutamine + ATP + H2O = GMP + L-glutamate + AMP + diphosphate + 2 H(+). Its pathway is purine metabolism; GMP biosynthesis; GMP from XMP (L-Gln route): step 1/1. Catalyzes the synthesis of GMP from XMP. The polypeptide is GMP synthase [glutamine-hydrolyzing] (Agathobacter rectalis (strain ATCC 33656 / DSM 3377 / JCM 17463 / KCTC 5835 / VPI 0990) (Eubacterium rectale)).